A 160-amino-acid chain; its full sequence is Ureidoglycolate lyase (160 aa).

It belongs to the ureidoglycolate lyase family. In terms of assembly, homodimer. Ni(2+) serves as cofactor.

The catalysed reaction is (S)-ureidoglycolate = urea + glyoxylate. Its pathway is nitrogen metabolism; (S)-allantoin degradation. Its function is as follows. Catalyzes the catabolism of the allantoin degradation intermediate (S)-ureidoglycolate, generating urea and glyoxylate. Involved in the anaerobic utilization of allantoin as sole nitrogen source. Reinforces the induction of genes involved in the degradation of allantoin and glyoxylate by producing glyoxylate. The polypeptide is Ureidoglycolate lyase (Escherichia coli O127:H6 (strain E2348/69 / EPEC)).